The primary structure comprises 133 residues: Large ribosomal subunit protein uL22 (133 aa).

It belongs to the universal ribosomal protein uL22 family. As to quaternary structure, part of the 50S ribosomal subunit.

This protein binds specifically to 23S rRNA; its binding is stimulated by other ribosomal proteins, e.g. L4, L17, and L20. It is important during the early stages of 50S assembly. It makes multiple contacts with different domains of the 23S rRNA in the assembled 50S subunit and ribosome. Functionally, the globular domain of the protein is located near the polypeptide exit tunnel on the outside of the subunit, while an extended beta-hairpin is found that lines the wall of the exit tunnel in the center of the 70S ribosome. In Nocardia farcinica (strain IFM 10152), this protein is Large ribosomal subunit protein uL22.